We begin with the raw amino-acid sequence, 307 residues long: Transcription factor Sox-3 (307 aa).

Residues 1–41 (MYSMLDTDLKSPVQQSNAPNGGPGTPGGKGNASIPDQERVK) are disordered. Over residues 21-30 (GGPGTPGGKG) the composition is skewed to gly residues. The segment at residues 40–108 (VKRPMNAFMV…VHMKEYPDYK (69 aa)) is a DNA-binding region (HMG box). Positions 259–270 (DLRDMISMYLPP) match the 9aaTAD motif.

As to quaternary structure, interacts with ctnnb1.

The protein localises to the nucleus. The protein resides in the cytoplasm. Functionally, transcription factor with sequence-specific DNA binding activity. Binds to the consensus sequence 5'-[AT][AT]CAA[AT]G-3', showing a preference for 5'-AACAAT-3' and 5'-AACAAAG-3'. Inhibits beta-catenin-mediated dorsal axis specification by binding to sites within the promoter of the beta-catenin-regulated gene nodal5. Maternally derived sox3 acts as a transcriptional repressor of nodal5 and nodal6 to restrict their expression to the vegetal hemisphere of early embryos and thus establish germ layer formation. Acts at multiple points to inhibit nodal signaling, repressing the expression of the other mesoderm-inducing nodal genes nodal, nodal2 and nodal4, and also acting downstream to induce expression of genes including trim33/ectodermin, ema and coco, whose products repress nodal signaling. This chain is Transcription factor Sox-3, found in Xenopus tropicalis (Western clawed frog).